Reading from the N-terminus, the 132-residue chain is MTMTDPVADMLTRLRNANSAHHDSVKMPFSKLKGHVADILKAEGYIASWKVEDAEVGKSLTIDLKFGPNRERSIAGIRRISKPGLRVYAKSTNLPKVLGGLGVAILSTSSGLLTDRQAAKKGVGGEVLAYVW.

It belongs to the universal ribosomal protein uS8 family. Part of the 30S ribosomal subunit. Contacts proteins S5 and S12.

One of the primary rRNA binding proteins, it binds directly to 16S rRNA central domain where it helps coordinate assembly of the platform of the 30S subunit. The sequence is that of Small ribosomal subunit protein uS8 from Renibacterium salmoninarum (strain ATCC 33209 / DSM 20767 / JCM 11484 / NBRC 15589 / NCIMB 2235).